The chain runs to 199 residues: Protein GrpE (199 aa).

Residues 1 to 24 (MSKQNKKDWKKFRDEHKEEHKVEN) show a composition bias toward basic and acidic residues. Residues 1–52 (MSKQNKKDWKKFRDEHKEEHKVENEILEEETDEESQHQEPALGHPSYTALEE) form a disordered region.

This sequence belongs to the GrpE family. Homodimer.

It is found in the cytoplasm. In terms of biological role, participates actively in the response to hyperosmotic and heat shock by preventing the aggregation of stress-denatured proteins, in association with DnaK and GrpE. It is the nucleotide exchange factor for DnaK and may function as a thermosensor. Unfolded proteins bind initially to DnaJ; upon interaction with the DnaJ-bound protein, DnaK hydrolyzes its bound ATP, resulting in the formation of a stable complex. GrpE releases ADP from DnaK; ATP binding to DnaK triggers the release of the substrate protein, thus completing the reaction cycle. Several rounds of ATP-dependent interactions between DnaJ, DnaK and GrpE are required for fully efficient folding. The protein is Protein GrpE of Legionella pneumophila (strain Lens).